A 761-amino-acid polypeptide reads, in one-letter code: Mitochondrial intermediate peptidase (761 aa).

The N-terminal 37 residues, 1–37 (MLIQKILLNKEISRLPRILSILNYTGLRWLSGSSGRN), are a transit peptide targeting the mitochondrion. Histidine 547 contacts Zn(2+). Residue glutamate 548 is part of the active site. Histidine 551 and histidine 554 together coordinate Zn(2+).

The protein belongs to the peptidase M3 family. The cofactor is Zn(2+).

It localises to the mitochondrion matrix. The catalysed reaction is Release of an N-terminal octapeptide as second stage of processing of some proteins imported into the mitochondrion.. Cleaves proteins, imported into the mitochondrion, to their mature size. While most mitochondrial precursor proteins are processed to the mature form in one step by mitochondrial processing peptidase (MPP), the sequential cleavage by MIP of an octapeptide after initial processing by MPP is a required step for a subgroup of nuclear-encoded precursor proteins destined for the matrix or the inner membrane. The polypeptide is Mitochondrial intermediate peptidase (OCT1) (Candida glabrata (strain ATCC 2001 / BCRC 20586 / JCM 3761 / NBRC 0622 / NRRL Y-65 / CBS 138) (Yeast)).